The primary structure comprises 393 residues: MANTVYDVTTWSGATISPYVDIGAVINQIIADIKANQTSQAARPGAVIYIPPGHYDLLTRVVVDVSFLQIKGSGHGFLSEAIRDESSTGSWVETQPGASHIRVKNTDGNREAFLVSRSGDPNVVGRLNSIEFKGFCLDGVTDSKPYSPGNSKIGISVQSDNDSFHVEGMGFVYLEHAIIVKGADAPNITNNFIAECGSCIELTGASQVAKITNNFLISAWAGYSIYAENAEGPLITGNSLLWAANITLSDCNRVSISSNKLLSNFPSMVALLGNCSENLIAANHFRRVSGDGTSTRFDDLFGLVHIEGNNNTVTGNMFSFNVPASSISPSGATPTIILVKSGDSNYLATNNIVSNVSAMVVLDGSTTATRIIYSAKNSQLNAYTTSYTLVPTP.

It carries out the reaction Produces alpha-D-fructofuranose beta-D-fructofuranose 1,2':2,1'-dianhydride (DFA I) by successively eliminating the diminishing (2-&gt;1)-beta-D-fructan (inulin) chain from the terminal D-fructosyl-D-fructosyl disaccharide.. This is Inulin fructotransferase [DFA-I-forming] from Arthrobacter globiformis.